The following is a 264-amino-acid chain: Thiazole synthase (264 aa).

Catalysis depends on K98, which acts as the Schiff-base intermediate with DXP. Residues G159, 185–186, and 207–208 contribute to the 1-deoxy-D-xylulose 5-phosphate site; these read AG and AS.

The protein belongs to the ThiG family. Homotetramer. Forms heterodimers with either ThiH or ThiS.

The protein localises to the cytoplasm. The enzyme catalyses [ThiS sulfur-carrier protein]-C-terminal-Gly-aminoethanethioate + 2-iminoacetate + 1-deoxy-D-xylulose 5-phosphate = [ThiS sulfur-carrier protein]-C-terminal Gly-Gly + 2-[(2R,5Z)-2-carboxy-4-methylthiazol-5(2H)-ylidene]ethyl phosphate + 2 H2O + H(+). The protein operates within cofactor biosynthesis; thiamine diphosphate biosynthesis. Its function is as follows. Catalyzes the rearrangement of 1-deoxy-D-xylulose 5-phosphate (DXP) to produce the thiazole phosphate moiety of thiamine. Sulfur is provided by the thiocarboxylate moiety of the carrier protein ThiS. In vitro, sulfur can be provided by H(2)S. This is Thiazole synthase from Streptomyces griseus subsp. griseus (strain JCM 4626 / CBS 651.72 / NBRC 13350 / KCC S-0626 / ISP 5235).